Reading from the N-terminus, the 292-residue chain is Nucleotide-binding protein Ldb0621 (292 aa).

An ATP-binding site is contributed by 14–21 (GMSGAGKT). 64-67 (DLRV) lines the GTP pocket.

It belongs to the RapZ-like family.

Functionally, displays ATPase and GTPase activities. In Lactobacillus delbrueckii subsp. bulgaricus (strain ATCC 11842 / DSM 20081 / BCRC 10696 / JCM 1002 / NBRC 13953 / NCIMB 11778 / NCTC 12712 / WDCM 00102 / Lb 14), this protein is Nucleotide-binding protein Ldb0621.